Reading from the N-terminus, the 221-residue chain is Small ribosomal subunit protein uS2 (221 aa).

This sequence belongs to the universal ribosomal protein uS2 family.

The chain is Small ribosomal subunit protein uS2 from Methanococcus maripaludis (strain C6 / ATCC BAA-1332).